Here is a 451-residue protein sequence, read N- to C-terminus: MTRKFFGTDGIRGQANSFPMTPEIAMKVGMAVGYIFRRKGQASRAVVGKDTRRSGYMLEKALVAGFTAAGMDVFLLGPIPTPAVAMLCRSLRADIGVMISASHNPFYDNGIKLFGPDGFKLSDQIELQIEAMIEGDMTPFLASHGDVGRAKRVDGDIYRYIEFAKRTLPRNISLNGLRVVVDCANGAGYKVAPAALWELGAEVITINNEPNGININEDCGSTHPIGLMKKVHEVRADVGIALDGDADRVLLVDENGTVIDGDQLMAVIAESWAASNRLEGGGIVATVMSNLGLERFLADRNLTLARTKVGDRYVVEHMREHGFNVGGEQSGHIVLSDFATTGDGLISALQILAVAQEQNKPISDVCRKFQPVPQLLKNVRTTGGKPLENKRVKSAIDEAKERLGGQGRLVIRPSGTEPLIRVMAEGDDRGLVEKVVNDIIDVISSESSAAA.

Ser-102 functions as the Phosphoserine intermediate in the catalytic mechanism. Positions 102, 243, 245, and 247 each coordinate Mg(2+). Phosphoserine is present on Ser-102.

The protein belongs to the phosphohexose mutase family. Mg(2+) serves as cofactor. Post-translationally, activated by phosphorylation.

It catalyses the reaction alpha-D-glucosamine 1-phosphate = D-glucosamine 6-phosphate. Catalyzes the conversion of glucosamine-6-phosphate to glucosamine-1-phosphate. The polypeptide is Phosphoglucosamine mutase (Brucella abortus (strain 2308)).